Reading from the N-terminus, the 829-residue chain is Probable beta-glucosidase H (829 aa).

D225 is a catalytic residue. The PA14 domain maps to 389–548 (RMLSNAVIRF…DPEQMVRDAV (160 aa)). 5 N-linked (GlcNAc...) asparagine glycosylation sites follow: N416, N431, N473, N602, and N627.

Belongs to the glycosyl hydrolase 3 family.

It is found in the secreted. The enzyme catalyses Hydrolysis of terminal, non-reducing beta-D-glucosyl residues with release of beta-D-glucose.. It participates in glycan metabolism; cellulose degradation. In terms of biological role, beta-glucosidases are one of a number of cellulolytic enzymes involved in the degradation of cellulosic biomass. Catalyzes the last step releasing glucose from the inhibitory cellobiose. This Aspergillus clavatus (strain ATCC 1007 / CBS 513.65 / DSM 816 / NCTC 3887 / NRRL 1 / QM 1276 / 107) protein is Probable beta-glucosidase H (bglH).